A 417-amino-acid polypeptide reads, in one-letter code: Serine hydroxymethyltransferase (417 aa).

Residues L121 and 125–127 (GHL) contribute to the (6S)-5,6,7,8-tetrahydrofolate site. An N6-(pyridoxal phosphate)lysine modification is found at K229. Residue 355–357 (SPF) participates in (6S)-5,6,7,8-tetrahydrofolate binding.

It belongs to the SHMT family. As to quaternary structure, homodimer. Requires pyridoxal 5'-phosphate as cofactor.

The protein resides in the cytoplasm. The catalysed reaction is (6R)-5,10-methylene-5,6,7,8-tetrahydrofolate + glycine + H2O = (6S)-5,6,7,8-tetrahydrofolate + L-serine. It participates in one-carbon metabolism; tetrahydrofolate interconversion. The protein operates within amino-acid biosynthesis; glycine biosynthesis; glycine from L-serine: step 1/1. Functionally, catalyzes the reversible interconversion of serine and glycine with tetrahydrofolate (THF) serving as the one-carbon carrier. This reaction serves as the major source of one-carbon groups required for the biosynthesis of purines, thymidylate, methionine, and other important biomolecules. Also exhibits THF-independent aldolase activity toward beta-hydroxyamino acids, producing glycine and aldehydes, via a retro-aldol mechanism. This is Serine hydroxymethyltransferase from Salmonella paratyphi C (strain RKS4594).